The chain runs to 102 residues: ATP-dependent Clp protease adapter protein ClpS (102 aa).

Belongs to the ClpS family. In terms of assembly, binds to the N-terminal domain of the chaperone ClpA.

Functionally, involved in the modulation of the specificity of the ClpAP-mediated ATP-dependent protein degradation. The protein is ATP-dependent Clp protease adapter protein ClpS of Shewanella baltica (strain OS155 / ATCC BAA-1091).